Consider the following 147-residue polypeptide: Large ribosomal subunit protein uL13 (147 aa).

Belongs to the universal ribosomal protein uL13 family. As to quaternary structure, part of the 50S ribosomal subunit.

Its function is as follows. This protein is one of the early assembly proteins of the 50S ribosomal subunit, although it is not seen to bind rRNA by itself. It is important during the early stages of 50S assembly. The chain is Large ribosomal subunit protein uL13 from Salinispora arenicola (strain CNS-205).